The sequence spans 71 residues: Peptide Ctri10261 (71 aa).

The first 23 residues, 1–23 (MKIPLILVTIAIILLMVPTESDA), serve as a signal peptide directing secretion. Phenylalanine 37 bears the Phenylalanine amide mark. Positions 41 to 71 (SLKNRDYFDYMQDPSLSNADLRELEELLEDY) are excised as a propeptide.

This sequence belongs to the non-disulfide-bridged peptide (NDBP) superfamily. Short antimicrobial peptide (group 4) family. In terms of tissue distribution, expressed by the venom gland.

The protein localises to the secreted. Its function is as follows. Antimicrobial peptide. This Chaerilus tricostatus (Scorpion) protein is Peptide Ctri10261.